Consider the following 182-residue polypeptide: Antigenic integral membrane glycoprotein (182 aa).

An N-terminal signal peptide occupies residues 1–35 (MFSFHERMKKKHVTIRVYKHERILVFLFVLFISTT). N-linked (GlcNAc...) asparagine glycosylation is found at N88 and N120. Residues 162–180 (EFLMSSCIVITLNLFIFMY) form a helical membrane-spanning segment. The S-palmitoyl cysteine moiety is linked to residue C168.

The protein localises to the cell membrane. Functionally, major antigen in the surface tegument. This Schistosoma mansoni (Blood fluke) protein is Antigenic integral membrane glycoprotein.